Reading from the N-terminus, the 652-residue chain is Tetracycline resistance protein TetP (652 aa).

The region spanning Lys-2–Asp-252 is the tr-type G domain. GTP is bound by residues Ala-11–Thr-18, Asp-75–His-79, and Asn-129–Asp-132.

It belongs to the TRAFAC class translation factor GTPase superfamily. Classic translation factor GTPase family. TetM/TetO subfamily.

Functionally, abolishes the inhibitory effect of tetracyclin on protein synthesis by a non-covalent modification of the ribosomes. The protein is Tetracycline resistance protein TetP (tetP) of Clostridium perfringens.